We begin with the raw amino-acid sequence, 243 residues long: Ribosomal RNA small subunit methyltransferase J (243 aa).

Residues 112-113 (ER) and D164 each bind S-adenosyl-L-methionine.

It belongs to the methyltransferase superfamily. RsmJ family.

Its subcellular location is the cytoplasm. It carries out the reaction guanosine(1516) in 16S rRNA + S-adenosyl-L-methionine = N(2)-methylguanosine(1516) in 16S rRNA + S-adenosyl-L-homocysteine + H(+). Its function is as follows. Specifically methylates the guanosine in position 1516 of 16S rRNA. The sequence is that of Ribosomal RNA small subunit methyltransferase J from Legionella pneumophila (strain Lens).